The sequence spans 149 residues: uncharacterized protein (149 aa).

Residues 111-140 (HKALEKATELIENEEELLKREGIKRENLKF) adopt a coiled-coil conformation.

This is an uncharacterized protein from Aquifex aeolicus (strain VF5).